The following is a 196-amino-acid chain: MAPGPSATQGILLLLPLLPLSQVTLGSADRNCDPSDQCPPQARWSSLWHVGLILLAILLMLLCGVTASCVRFCCLRKQTHTQSHTPAAWQPCDGTVIPVDSDSPAHSTVTSYSSVQYPLGMRLPLYFGEPDPDSMVPPTYSLYASELPPSYDEVVKMIKAREEVAAPSEKTNSLPEALEPETTGGPQEPGPSAQRP.

The signal sequence occupies residues 1–28; the sequence is MAPGPSATQGILLLLPLLPLSQVTLGSA. A helical transmembrane segment spans residues 47 to 67; the sequence is LWHVGLILLAILLMLLCGVTA. The interval 162 to 196 is disordered; the sequence is EEVAAPSEKTNSLPEALEPETTGGPQEPGPSAQRP.

The protein resides in the membrane. The sequence is that of Transmembrane protein 52 (Tmem52) from Mus musculus (Mouse).